Reading from the N-terminus, the 385-residue chain is Chorismate synthase (385 aa).

Arg40 and Arg46 together coordinate NADP(+). FMN contacts are provided by residues 128–130 (RAS), 248–249 (QA), Gly293, 308–312 (KAIPS), and Arg334.

Belongs to the chorismate synthase family. Homotetramer. Requires FMNH2 as cofactor.

The enzyme catalyses 5-O-(1-carboxyvinyl)-3-phosphoshikimate = chorismate + phosphate. It functions in the pathway metabolic intermediate biosynthesis; chorismate biosynthesis; chorismate from D-erythrose 4-phosphate and phosphoenolpyruvate: step 7/7. Its function is as follows. Catalyzes the anti-1,4-elimination of the C-3 phosphate and the C-6 proR hydrogen from 5-enolpyruvylshikimate-3-phosphate (EPSP) to yield chorismate, which is the branch point compound that serves as the starting substrate for the three terminal pathways of aromatic amino acid biosynthesis. This reaction introduces a second double bond into the aromatic ring system. The chain is Chorismate synthase from Endomicrobium trichonymphae.